Consider the following 159-residue polypeptide: Large ribosomal subunit protein uL11 (159 aa).

Belongs to the universal ribosomal protein uL11 family. In terms of assembly, part of the ribosomal stalk of the 50S ribosomal subunit. Interacts with L10 and the large rRNA to form the base of the stalk. L10 forms an elongated spine to which L12 dimers bind in a sequential fashion forming a multimeric L10(L12)X complex.

In terms of biological role, forms part of the ribosomal stalk which helps the ribosome interact with GTP-bound translation factors. The polypeptide is Large ribosomal subunit protein uL11 (Methanococcus maripaludis (strain DSM 14266 / JCM 13030 / NBRC 101832 / S2 / LL)).